Consider the following 629-residue polypeptide: Probable potassium transport system protein Kup 3 (629 aa).

The next 12 membrane-spanning stretches (helical) occupy residues 20–40, 54–74, 106–126, 143–163, 171–191, 212–232, 253–273, 291–311, 343–363, 372–392, 400–420, and 425–445; these read LSLS…LYTF, VTTI…IASV, PFII…GTIT, PSLK…LFAI, IGKA…ILGA, FLFS…LCVT, WFGL…ALVL, FLLP…QAII, IYIG…IIGF, AYGI…FIAL, IIKS…FFAA, and FING…MMYI.

This sequence belongs to the HAK/KUP transporter (TC 2.A.72) family.

It is found in the cell inner membrane. It catalyses the reaction K(+)(in) + H(+)(in) = K(+)(out) + H(+)(out). Its function is as follows. Transport of potassium into the cell. Likely operates as a K(+):H(+) symporter. In Legionella pneumophila (strain Corby), this protein is Probable potassium transport system protein Kup 3.